Consider the following 284-residue polypeptide: Stomatin (284 aa).

Topologically, residues 1–31 are cytoplasmic; it reads MSDKRQSSHVQSQRIPESFRENSKTELGACG. Residue Ser18 is modified to Phosphoserine. A lipid anchor (S-palmitoyl cysteine) is attached at Cys30. The stretch at 32–52 is an intramembrane region; sequence WILVAASFFFVIITFPISIWI. Topologically, residues 53 to 284 are cytoplasmic; that stretch reads CIKIVKEYER…MLQGIMGSNH (232 aa). Residue Cys87 is the site of S-palmitoyl cysteine attachment. 2 positions are modified to phosphoserine: Ser161 and Ser244. The tract at residues 265–273 is required for homooligomerization; it reads STIVFPLPV. The segment at 267-269 is required for lipid raft association; that stretch reads IVF. Residues 273-284 are interaction with LANCL1; sequence VDMLQGIMGSNH.

This sequence belongs to the band 7/mec-2 family. Interacts with LANCL1. Interacts with SLC2A1. Interacts with SLC4A1; this interaction positively regulates SLC4A1 activity. Identified in large complexes with SLC40A1, SLC14A1, SLC29A1 and AQP1. Homodimer and higher order homooligomers. The homodimer is banana-shaped. Interacts with ASIC1, ASIC2 and ASIC3. Interacts with STOML1; may redistribute STOM from the plasma membrane to late endosomes. Expressed in all sensory neurons of the dorsal root ganglia. In the CNS, expressed in many neurons of the spinal cord, medulla and pons. Expressed only in scattered neurons in the cortex, hippocampus, thalamus and basal ganglia. In the cerebellum, expressed in all Purkinje cells (at protein level). Widely expressed with high levels in heart, liver, skeletal muscle and testis and low levels in lung, brain and spleen.

The protein localises to the cell membrane. Its subcellular location is the cytoplasm. The protein resides in the cytoskeleton. It localises to the membrane raft. It is found in the melanosome. The protein localises to the cytoplasmic vesicle. Functionally, regulates ion channel activity and transmembrane ion transport. Regulates ASIC2 and ASIC3 channel activity. The chain is Stomatin from Mus musculus (Mouse).